Reading from the N-terminus, the 140-residue chain is Tumor protein D55 (140 aa).

Positions 1–28 (MPHARTETSVGTYESHSTSELEDLTEPE) are disordered. The segment covering 7–18 (ETSVGTYESHST) has biased composition (polar residues). Residues 28–57 (EQRELKTKLTKLEAEIVTLRHVLAAKERRC) adopt a coiled-coil conformation.

The protein belongs to the TPD52 family. Interacts with TPD52L2. Specifically expressed in testis. Expressed at 5.6-fold higher levels in adult testis than in fetal testis.

The sequence is that of Tumor protein D55 (TPD52L3) from Homo sapiens (Human).